A 182-amino-acid polypeptide reads, in one-letter code: Translation initiation factor IF-3 (182 aa).

Residues 1–22 (MPLGDCNISTPDNKQNRKNQEI) form a disordered region.

Belongs to the IF-3 family. In terms of assembly, monomer.

Its subcellular location is the cytoplasm. Functionally, IF-3 binds to the 30S ribosomal subunit and shifts the equilibrium between 70S ribosomes and their 50S and 30S subunits in favor of the free subunits, thus enhancing the availability of 30S subunits on which protein synthesis initiation begins. The protein is Translation initiation factor IF-3 of Xanthomonas campestris pv. campestris (strain ATCC 33913 / DSM 3586 / NCPPB 528 / LMG 568 / P 25).